We begin with the raw amino-acid sequence, 236 residues long: Dolichol-phosphate mannosyltransferase (236 aa).

12 residues coordinate GDP-alpha-D-mannose: proline 9, tyrosine 11, glutamate 13, isoleucine 40, aspartate 42, aspartate 95, alanine 96, aspartate 97, arginine 124, valine 160, arginine 211, and lysine 217. Aspartate 97 contributes to the Mg(2+) binding site. Aspartate 97 is a Mn(2+) binding site.

This sequence belongs to the glycosyltransferase 2 family. In terms of assembly, component of the dolichol-phosphate mannose (DPM) synthase complex composed of dpm1, dpm2 and dpm3. Requires Mg(2+) as cofactor. Mn(2+) serves as cofactor. The cofactor is Ca(2+).

It localises to the endoplasmic reticulum. It carries out the reaction a di-trans,poly-cis-dolichyl phosphate + GDP-alpha-D-mannose = a di-trans,poly-cis-dolichyl beta-D-mannosyl phosphate + GDP. It participates in protein modification; protein glycosylation. In terms of biological role, transfers mannose from GDP-mannose to dolichol monophosphate to form dolichol phosphate mannose (Dol-P-Man) which is the mannosyl donor in pathways leading to N-glycosylation, glycosyl phosphatidylinositol membrane anchoring, and O-mannosylation of proteins. This is Dolichol-phosphate mannosyltransferase from Schizosaccharomyces pombe (strain 972 / ATCC 24843) (Fission yeast).